Here is a 75-residue protein sequence, read N- to C-terminus: Theromacin (75 aa).

5 disulfides stabilise this stretch: C2–C9, C24–C28, C31–C73, C39–C47, and C57–C59.

It belongs to the macin family.

The protein resides in the secreted. In terms of biological role, has a bactericial activity. This Hirudo medicinalis (Medicinal leech) protein is Theromacin.